Reading from the N-terminus, the 396-residue chain is Elongation factor Tu (396 aa).

Residues 10-205 enclose the tr-type G domain; that stretch reads KPHVNIGTIG…ACDDNIPDPV (196 aa). The interval 19–26 is G1; that stretch reads GHVDHGKT. GTP is bound at residue 19–26; sequence GHVDHGKT. Thr-26 serves as a coordination point for Mg(2+). A G2 region spans residues 62-66; it reads GITIN. The G3 stretch occupies residues 83 to 86; sequence DAPG. Residues 83-87 and 138-141 contribute to the GTP site; these read DAPGH and NKCD. Residues 138 to 141 are G4; that stretch reads NKCD. The segment at 175–177 is G5; that stretch reads SAL.

It belongs to the TRAFAC class translation factor GTPase superfamily. Classic translation factor GTPase family. EF-Tu/EF-1A subfamily. Monomer.

It is found in the cytoplasm. It carries out the reaction GTP + H2O = GDP + phosphate + H(+). GTP hydrolase that promotes the GTP-dependent binding of aminoacyl-tRNA to the A-site of ribosomes during protein biosynthesis. The sequence is that of Elongation factor Tu from Corynebacterium glutamicum (strain R).